The primary structure comprises 367 residues: Germination protease (367 aa).

The propeptide occupies methionine 1–aspartate 15.

Belongs to the peptidase A25 family. In terms of assembly, homotetramer. In terms of processing, autoproteolytically processed. The inactive tetrameric zymogen termed p46 autoprocesses to a smaller form termed p41, which is active only during spore germination.

The enzyme catalyses Endopeptidase action with P4 Glu or Asp, P1 preferably Glu &gt; Asp, P1' hydrophobic and P2' Ala.. Initiates the rapid degradation of small, acid-soluble proteins during spore germination. The protein is Germination protease of Bacillus cereus (strain B4264).